Reading from the N-terminus, the 398-residue chain is Glycerol-3-phosphate dehydrogenase [NAD(+)] 1 (398 aa).

Residues 50 to 55, phenylalanine 138, lysine 161, and alanine 194 contribute to the NAD(+) site; that span reads GSGNWG. Residue lysine 161 coordinates substrate. The active-site Proton acceptor is lysine 253. NAD(+)-binding residues include arginine 318 and glutamine 350. Residue 318-319 participates in substrate binding; it reads RN.

It belongs to the NAD-dependent glycerol-3-phosphate dehydrogenase family.

It is found in the cytoplasm. It carries out the reaction sn-glycerol 3-phosphate + NAD(+) = dihydroxyacetone phosphate + NADH + H(+). This Yarrowia lipolytica (strain CLIB 122 / E 150) (Yeast) protein is Glycerol-3-phosphate dehydrogenase [NAD(+)] 1 (GPD1).